The sequence spans 919 residues: MYVLKRLELRNIMSHFNTSIDFREGFTAIVGRNGAGKSTILEAILFSITPHQAPRRSSMISENSSRGEIYLALQSSEGRLLELRNKLIRRGGGTNTEAAIITLEGRRIASKPTGYKEEIHKILGLRGLPNPASYIEKAIIISQGGLQTLAEILSEPKELRDLLDAALGYALLKQAISNIGDVVLGVSPDGSPVKLGSKSITRLQSGYMTLRNEVLGVDREIREASKRLEELEREREELERRARDLESEAKALQSEIGKLETMEEMLVNVTSMIRSERSKLDTINTRLRYAESKISSIDDLEKRRAELRAKASLAHEVAELARLQSRLDKLGRDLEMIRDAVEKLEVSRRLKEIESARREAENRLLEARSSIKEEQRRYTLLDYRVTRGRSIVTNIRRVLSECRSKDLCGSEKPESVLERLDAVINDLESKARALDQEASALEAEARRLVQALSMLEESGGSARCPVCGAELPPGRAEAIARHYRHEAERLRKAAKEKAAEAEKARAEASRLQDKRRRIELLLSRLNQLEEGLRELGFQTPEDLAKAEQKLRMLRERLEELRKLENSLEEKVRNLSREEVALREAKTRALEVLQRLGIKEEEAREKLKTLSSESKKLERMLVSKAEDLATRLGITAYRSLDDLLEKAREALEGVDKELSAIERRLEEARRLKEEAAKLKWEAEQVMKRLEELEAEEKKLRKEVSRKSEIEARLKEVQNTLAELDDRISRIDREMGELQTRIREMKSRKASGEEALKLYLPAAASRRIMEEIGEIAYRRLLAVLEDEMNDILSRFNLDVAGVEIREKAAREIEVKAIGGNGAYRPLEAVSGGERTVLALSFVLALNKAVGGKLGFLALDEPTANLDEDRRRSLVEVLRGISVEGLVRQLVVVTHHEDVRDYADTICLVTRTQQGSRVECTY.

Residues 33 to 39 (NGAGKST) and Gln-143 each bind ATP. Coiled coils occupy residues 208-268 (MTLR…MLVN), 315-379 (HEVA…RRYT), and 414-458 (ESVL…LEES). The 100-residue stretch at 417 to 516 (LERLDAVIND…EASRLQDKRR (100 aa)) folds into the Zinc-hook domain. Zn(2+)-binding residues include Cys-464 and Cys-467. Coiled coils occupy residues 486–515 (EAERLRKAAKEKAAEAEKARAEASRLQDKR), 541–595 (EDLA…LQRL), and 635–749 (AYRS…RKAS).

It belongs to the SMC family. RAD50 subfamily. Homodimer. Forms a heterotetramer composed of two Mre11 subunits and two Rad50 subunits. The cofactor is Zn(2+).

Functionally, part of the Rad50/Mre11 complex, which is involved in the early steps of DNA double-strand break (DSB) repair. The complex may facilitate opening of the processed DNA ends to aid in the recruitment of HerA and NurA. Rad50 controls the balance between DNA end bridging and DNA resection via ATP-dependent structural rearrangements of the Rad50/Mre11 complex. The chain is DNA double-strand break repair Rad50 ATPase from Aeropyrum pernix (strain ATCC 700893 / DSM 11879 / JCM 9820 / NBRC 100138 / K1).